We begin with the raw amino-acid sequence, 417 residues long: Serine hydroxymethyltransferase (417 aa).

Residues leucine 116 and glycine 120–leucine 122 contribute to the (6S)-5,6,7,8-tetrahydrofolate site. At lysine 225 the chain carries N6-(pyridoxal phosphate)lysine.

Belongs to the SHMT family. In terms of assembly, homodimer. Requires pyridoxal 5'-phosphate as cofactor.

The protein localises to the cytoplasm. The catalysed reaction is (6R)-5,10-methylene-5,6,7,8-tetrahydrofolate + glycine + H2O = (6S)-5,6,7,8-tetrahydrofolate + L-serine. It functions in the pathway one-carbon metabolism; tetrahydrofolate interconversion. The protein operates within amino-acid biosynthesis; glycine biosynthesis; glycine from L-serine: step 1/1. Functionally, catalyzes the reversible interconversion of serine and glycine with tetrahydrofolate (THF) serving as the one-carbon carrier. This reaction serves as the major source of one-carbon groups required for the biosynthesis of purines, thymidylate, methionine, and other important biomolecules. Also exhibits THF-independent aldolase activity toward beta-hydroxyamino acids, producing glycine and aldehydes, via a retro-aldol mechanism. This is Serine hydroxymethyltransferase from Hydrogenobaculum sp. (strain Y04AAS1).